Consider the following 586-residue polypeptide: MKQSVSAEQIELKSSLPGSKKVYVDGPREGMKVPMREIEQSDTNGVPNPPIRVYDTSGPYTDPAYKVELEKGIPTPRHSWILERGDVEAYEGREVKPEDDGVKVASKHTPVFPQMDRKPLRAKQGANVTQMHYARNGIITSEMEYVAIREGVDPEFVRKEIAEGRAILPANINHPEAEPMIIGRNFHVKVNANIGNSAVSSSIAEEVEKMTWATRWGADTIMDLSTGKNIHTTREWIIRNAPVPVGTVPIYQALEKVNGIAEDLTWEVYRDTLIEQAEQGVDYFTIHAGVLLRYIPITAKRTTGIVSRGGSIMAQWCLFHHKENFLYTHFEEICEIMKQYDVSFSLGDGLRPGSIADANDEAQFSELETLGELTKIAWKHDVQVMIEGPGHVPMHLIKENMEKELDICQGAPFYTLGPLTTDIAPGYDHITSAIGAAMIGWFGTAMLCYVTPKEHLGLPNKDDVREGVITYKIAAHAADLAKGHKTAHQRDDALSKARFEFRWRDQFNLSLDPERAMEYHDETLPAEGAKTAHFCSMCGPKFCSMRISHDIREYAKENDLETTEAIEKGMKEKAKEFKETGSHLYQ.

The disordered stretch occupies residues 1 to 59 (MKQSVSAEQIELKSSLPGSKKVYVDGPREGMKVPMREIEQSDTNGVPNPPIRVYDTSGP). Positions 22–39 (VYVDGPREGMKVPMREIE) are enriched in basic and acidic residues. Residues N193, M222, Y251, H287, 307–309 (SRG), 348–351 (DGLR), and E387 contribute to the substrate site. H391 serves as a coordination point for Zn(2+). Y414 is a substrate binding site. Residue H455 participates in Zn(2+) binding. Positions 535, 538, and 543 each coordinate [4Fe-4S] cluster.

It belongs to the ThiC family. Requires [4Fe-4S] cluster as cofactor.

The enzyme catalyses 5-amino-1-(5-phospho-beta-D-ribosyl)imidazole + S-adenosyl-L-methionine = 4-amino-2-methyl-5-(phosphooxymethyl)pyrimidine + CO + 5'-deoxyadenosine + formate + L-methionine + 3 H(+). Its pathway is cofactor biosynthesis; thiamine diphosphate biosynthesis. Its function is as follows. Catalyzes the synthesis of the hydroxymethylpyrimidine phosphate (HMP-P) moiety of thiamine from aminoimidazole ribotide (AIR) in a radical S-adenosyl-L-methionine (SAM)-dependent reaction. This Bacillus cereus (strain ZK / E33L) protein is Phosphomethylpyrimidine synthase.